A 375-amino-acid polypeptide reads, in one-letter code: Queuine tRNA-ribosyltransferase (375 aa).

The active-site Proton acceptor is D89. Residues 89-93 (DSGGF), D143, Q187, and G214 each bind substrate. Residues 245–251 (GVGKPED) are RNA binding. D264 (nucleophile) is an active-site residue. Residues 269–273 (TRNAR) form an RNA binding; important for wobble base 34 recognition region. Zn(2+) contacts are provided by C302, C304, C307, and H333.

The protein belongs to the queuine tRNA-ribosyltransferase family. As to quaternary structure, homodimer. Within each dimer, one monomer is responsible for RNA recognition and catalysis, while the other monomer binds to the replacement base PreQ1. Requires Zn(2+) as cofactor.

It carries out the reaction 7-aminomethyl-7-carbaguanine + guanosine(34) in tRNA = 7-aminomethyl-7-carbaguanosine(34) in tRNA + guanine. The protein operates within tRNA modification; tRNA-queuosine biosynthesis. Its function is as follows. Catalyzes the base-exchange of a guanine (G) residue with the queuine precursor 7-aminomethyl-7-deazaguanine (PreQ1) at position 34 (anticodon wobble position) in tRNAs with GU(N) anticodons (tRNA-Asp, -Asn, -His and -Tyr). Catalysis occurs through a double-displacement mechanism. The nucleophile active site attacks the C1' of nucleotide 34 to detach the guanine base from the RNA, forming a covalent enzyme-RNA intermediate. The proton acceptor active site deprotonates the incoming PreQ1, allowing a nucleophilic attack on the C1' of the ribose to form the product. After dissociation, two additional enzymatic reactions on the tRNA convert PreQ1 to queuine (Q), resulting in the hypermodified nucleoside queuosine (7-(((4,5-cis-dihydroxy-2-cyclopenten-1-yl)amino)methyl)-7-deazaguanosine). The sequence is that of Queuine tRNA-ribosyltransferase from Enterobacter sp. (strain 638).